Reading from the N-terminus, the 274-residue chain is Proliferating cell nuclear antigen 1 (274 aa).

The DNA-binding element occupies 61 to 80; sequence RCDRERVLGVNIASLNKVFK.

The protein belongs to the PCNA family. As to quaternary structure, homotrimer. Interacts with ORC1 (via PIP-box motif); the interaction occurs during DNA replication in trophozoites. Interacts with ORC5; the interaction occurs during the trophozoite stage but not at the late schizont stage. Interacts with FEN1.

It is found in the nucleus. The protein localises to the chromosome. It localises to the cytoplasm. Auxiliary protein of DNA polymerase delta and is involved in the control of DNA replication by increasing the polymerase processibility during elongation of the leading strand. Involved in DNA damage response. This is Proliferating cell nuclear antigen 1 from Plasmodium falciparum (isolate 3D7).